We begin with the raw amino-acid sequence, 173 residues long: 2-C-methyl-D-erythritol 2,4-cyclodiphosphate synthase (173 aa).

Asp-17 and His-19 together coordinate a divalent metal cation. Residues 17 to 19 (DVH) and 49 to 50 (HS) each bind 4-CDP-2-C-methyl-D-erythritol 2-phosphate. His-57 is an a divalent metal cation binding site. Residues 76–80 (FPNTD), 147–150 (TTTE), Phe-154, and Arg-157 contribute to the 4-CDP-2-C-methyl-D-erythritol 2-phosphate site.

Belongs to the IspF family. Homotrimer. A divalent metal cation serves as cofactor.

The enzyme catalyses 4-CDP-2-C-methyl-D-erythritol 2-phosphate = 2-C-methyl-D-erythritol 2,4-cyclic diphosphate + CMP. Its pathway is isoprenoid biosynthesis; isopentenyl diphosphate biosynthesis via DXP pathway; isopentenyl diphosphate from 1-deoxy-D-xylulose 5-phosphate: step 4/6. Functionally, involved in the biosynthesis of isopentenyl diphosphate (IPP) and dimethylallyl diphosphate (DMAPP), two major building blocks of isoprenoid compounds. Catalyzes the conversion of 4-diphosphocytidyl-2-C-methyl-D-erythritol 2-phosphate (CDP-ME2P) to 2-C-methyl-D-erythritol 2,4-cyclodiphosphate (ME-CPP) with a corresponding release of cytidine 5-monophosphate (CMP). The protein is 2-C-methyl-D-erythritol 2,4-cyclodiphosphate synthase of Ehrlichia canis (strain Jake).